The primary structure comprises 469 residues: Cyclin-dependent kinase 14 (469 aa).

Residues Ser-24, Ser-78, and Ser-95 each carry the phosphoserine modification. The disordered stretch occupies residues 103-133 (FKTSSTGKESPKVRRHSSPSSPTSPKFGKAD). Ser-134 bears the Phosphoserine mark. One can recognise a Protein kinase domain in the interval 135 to 419 (YEKLEKLGEG…AQAALSHEYF (285 aa)). Residues 141–149 (LGEGSYATV) and Lys-164 each bind ATP. Asp-256 serves as the catalytic Proton acceptor. A disordered region spans residues 449 to 469 (ESMRAFGKNNSYGKSLSNSKH). Residues 456–469 (KNNSYGKSLSNSKH) are compositionally biased toward polar residues.

It belongs to the protein kinase superfamily. CMGC Ser/Thr protein kinase family. CDC2/CDKX subfamily. In terms of assembly, found in a complex with LRP6, CCNY and CAPRIN2 during G2/M stage; CAPRIN2 functions as a scaffold for the complex by binding to CCNY via its N terminus and to CDK14 via its C terminus. Interacts with CCNY; CCNY mediates its recruitment to the plasma membrane and promotes phosphorylation of LRP6. Interacts with CCDN3 and CDKN1A. Interacts with SEPT8. Interacts with 14-3-3 proteina YWHAB, YWHAE, YWHAH and YWHAQ. In terms of tissue distribution, highly expressed in brain, pancreas, kidney, heart, testis and ovary. Also detected at lower levels in other tissues except in spleen and thymus where expression is barely detected.

It localises to the cell membrane. The protein resides in the cytoplasm. Its subcellular location is the nucleus. It catalyses the reaction L-seryl-[protein] + ATP = O-phospho-L-seryl-[protein] + ADP + H(+). It carries out the reaction L-threonyl-[protein] + ATP = O-phospho-L-threonyl-[protein] + ADP + H(+). With respect to regulation, serine/threonine-protein kinase activity is promoted by associated cyclins CCDN3 and CCNY and repressed by CDKN1A. Functionally, serine/threonine-protein kinase involved in the control of the eukaryotic cell cycle, whose activity is controlled by an associated cyclin. Acts as a cell-cycle regulator of Wnt signaling pathway during G2/M phase by mediating the phosphorylation of LRP6 at 'Ser-1490', leading to the activation of the Wnt signaling pathway. Acts as a regulator of cell cycle progression and cell proliferation via its interaction with CCDN3. Phosphorylates RB1 in vitro, however the relevance of such result remains to be confirmed in vivo. May also play a role in meiosis, neuron differentiation and may indirectly act as a negative regulator of insulin-responsive glucose transport. The protein is Cyclin-dependent kinase 14 (CDK14) of Homo sapiens (Human).